We begin with the raw amino-acid sequence, 268 residues long: Cytochrome c oxidase subunit 3 (268 aa).

7 consecutive transmembrane segments (helical) span residues 19–39 (PWPI…VLTM), 49–69 (FDLG…DIVI), 85–105 (LIIG…SVFW), 124–144 (PVGI…IILL), 165–185 (SIIG…FQAF), 202–222 (VFFA…LFLF), and 245–265 (ILYW…VYFW).

It belongs to the cytochrome c oxidase subunit 3 family. In terms of assembly, component of the cytochrome c oxidase (complex IV, CIV), a multisubunit enzyme composed of a catalytic core of 3 subunits and several supernumerary subunits. The complex exists as a monomer or a dimer and forms supercomplexes (SCs) in the inner mitochondrial membrane with ubiquinol-cytochrome c oxidoreductase (cytochrome b-c1 complex, complex III, CIII).

The protein resides in the mitochondrion inner membrane. The enzyme catalyses 4 Fe(II)-[cytochrome c] + O2 + 8 H(+)(in) = 4 Fe(III)-[cytochrome c] + 2 H2O + 4 H(+)(out). Functionally, component of the cytochrome c oxidase, the last enzyme in the mitochondrial electron transport chain which drives oxidative phosphorylation. The respiratory chain contains 3 multisubunit complexes succinate dehydrogenase (complex II, CII), ubiquinol-cytochrome c oxidoreductase (cytochrome b-c1 complex, complex III, CIII) and cytochrome c oxidase (complex IV, CIV), that cooperate to transfer electrons derived from NADH and succinate to molecular oxygen, creating an electrochemical gradient over the inner membrane that drives transmembrane transport and the ATP synthase. Cytochrome c oxidase is the component of the respiratory chain that catalyzes the reduction of oxygen to water. Electrons originating from reduced cytochrome c in the intermembrane space (IMS) are transferred via the dinuclear copper A center (CU(A)) of subunit 2 and heme A of subunit 1 to the active site in subunit 1, a binuclear center (BNC) formed by heme A3 and copper B (CU(B)). The BNC reduces molecular oxygen to 2 water molecules using 4 electrons from cytochrome c in the IMS and 4 protons from the mitochondrial matrix. This chain is Cytochrome c oxidase subunit 3 (COIII), found in Schizophyllum commune (Split gill fungus).